The chain runs to 418 residues: Putative competence-damage inducible protein (418 aa).

This sequence belongs to the CinA family.

In Streptococcus gordonii (strain Challis / ATCC 35105 / BCRC 15272 / CH1 / DL1 / V288), this protein is Putative competence-damage inducible protein.